We begin with the raw amino-acid sequence, 113 residues long: Large ribosomal subunit protein uL22 (113 aa).

The protein belongs to the universal ribosomal protein uL22 family. In terms of assembly, part of the 50S ribosomal subunit.

This protein binds specifically to 23S rRNA; its binding is stimulated by other ribosomal proteins, e.g. L4, L17, and L20. It is important during the early stages of 50S assembly. It makes multiple contacts with different domains of the 23S rRNA in the assembled 50S subunit and ribosome. Its function is as follows. The globular domain of the protein is located near the polypeptide exit tunnel on the outside of the subunit, while an extended beta-hairpin is found that lines the wall of the exit tunnel in the center of the 70S ribosome. This is Large ribosomal subunit protein uL22 from Stenotrophomonas maltophilia (strain K279a).